A 309-amino-acid polypeptide reads, in one-letter code: UPF0252 protein PH0672 (309 aa).

2 consecutive transmembrane segments (helical) span residues 5-25 (SVII…NESI) and 106-126 (AVLT…LMIF).

Belongs to the UPF0252 family.

The protein resides in the cell membrane. In Pyrococcus horikoshii (strain ATCC 700860 / DSM 12428 / JCM 9974 / NBRC 100139 / OT-3), this protein is UPF0252 protein PH0672.